A 307-amino-acid polypeptide reads, in one-letter code: Voltage-dependent anion channel-forming protein sll1024 (307 aa).

4 consecutive transmembrane segments (helical) span residues 26–46, 54–74, 226–246, and 247–267; these read VIPA…GVTL, FSIP…LLVF, LIFL…HWAT, and AFVV…GVEI.

The protein belongs to the anion channel-forming bestrophin (TC 1.A.46) family.

The protein localises to the cell membrane. This chain is Voltage-dependent anion channel-forming protein sll1024, found in Synechocystis sp. (strain ATCC 27184 / PCC 6803 / Kazusa).